A 226-amino-acid polypeptide reads, in one-letter code: tRNA (guanine-N(7)-)-methyltransferase (226 aa).

Residues 1-22 (MTTPQQPHGPLRSFGRLKSRPV) form a disordered region. S-adenosyl-L-methionine-binding residues include Glu-59, Glu-84, Asp-111, and Asp-133. Asp-133 is a catalytic residue. Residue Lys-137 participates in substrate binding. An interaction with RNA region spans residues 139–144 (RHNKRR). Substrate contacts are provided by residues Asp-169 and 206-209 (TRYE).

Belongs to the class I-like SAM-binding methyltransferase superfamily. TrmB family.

It catalyses the reaction guanosine(46) in tRNA + S-adenosyl-L-methionine = N(7)-methylguanosine(46) in tRNA + S-adenosyl-L-homocysteine. The protein operates within tRNA modification; N(7)-methylguanine-tRNA biosynthesis. Functionally, catalyzes the formation of N(7)-methylguanine at position 46 (m7G46) in tRNA. The protein is tRNA (guanine-N(7)-)-methyltransferase of Caulobacter vibrioides (strain ATCC 19089 / CIP 103742 / CB 15) (Caulobacter crescentus).